A 468-amino-acid polypeptide reads, in one-letter code: ATP synthase subunit beta (468 aa).

Position 155-162 (155-162 (GGAGVGKT)) interacts with ATP.

Belongs to the ATPase alpha/beta chains family. As to quaternary structure, F-type ATPases have 2 components, CF(1) - the catalytic core - and CF(0) - the membrane proton channel. CF(1) has five subunits: alpha(3), beta(3), gamma(1), delta(1), epsilon(1). CF(0) has three main subunits: a(1), b(2) and c(9-12). The alpha and beta chains form an alternating ring which encloses part of the gamma chain. CF(1) is attached to CF(0) by a central stalk formed by the gamma and epsilon chains, while a peripheral stalk is formed by the delta and b chains.

It localises to the cell membrane. The enzyme catalyses ATP + H2O + 4 H(+)(in) = ADP + phosphate + 5 H(+)(out). In terms of biological role, produces ATP from ADP in the presence of a proton gradient across the membrane. The catalytic sites are hosted primarily by the beta subunits. In Streptococcus pyogenes serotype M5 (strain Manfredo), this protein is ATP synthase subunit beta.